The chain runs to 734 residues: NAD(P)H-quinone oxidoreductase subunit 5, chloroplastic (734 aa).

16 helical membrane-spanning segments follow: residues 9–29 (WVIPLLPLPVIMSMGFGLFLV), 39–59 (IWAFPSVLLLSIAMVFSVHLS), 89–109 (IDPLTSIMLILITTVGILVLI), 125–145 (FVYISFFNTSMLGLVTSSNLI), 147–167 (IYFFWELVGMCSYLLIGFWFT), 185–205 (GDFGLLLGILGFFWITGSLEF), 224–244 (LLTILCAFLLFLGAVAKSAQF), 258–278 (TPISALIHAATMVAAGIFLIA), 280–300 (LLPLFISLPLIMSFISLIGTL), 327–347 (LGYMMLALGIGSYQAALFHLI), 354–374 (ALLFLGSGSVIHSMEPLVGYS), 396–416 (TCFLWGTLSLCGIPPLACFWS), 425–445 (WLYSPFFGIIASFTAGLTAFY), 542–562 (LFPLLILLLCTLFIGSIGIHF), 605–625 (SLAIFGLFIAYMFYGSAYSFF), and 714–734 (ISSYLFFFLCYVSVFLFFFLS).

Belongs to the complex I subunit 5 family. As to quaternary structure, NDH is composed of at least 16 different subunits, 5 of which are encoded in the nucleus.

It is found in the plastid. The protein localises to the chloroplast thylakoid membrane. It carries out the reaction a plastoquinone + NADH + (n+1) H(+)(in) = a plastoquinol + NAD(+) + n H(+)(out). The catalysed reaction is a plastoquinone + NADPH + (n+1) H(+)(in) = a plastoquinol + NADP(+) + n H(+)(out). Functionally, NDH shuttles electrons from NAD(P)H:plastoquinone, via FMN and iron-sulfur (Fe-S) centers, to quinones in the photosynthetic chain and possibly in a chloroplast respiratory chain. The immediate electron acceptor for the enzyme in this species is believed to be plastoquinone. Couples the redox reaction to proton translocation, and thus conserves the redox energy in a proton gradient. This Oryza nivara (Indian wild rice) protein is NAD(P)H-quinone oxidoreductase subunit 5, chloroplastic (ndhF).